The primary structure comprises 427 residues: Enolase (427 aa).

Glutamine 163 contributes to the (2R)-2-phosphoglycerate binding site. The Proton donor role is filled by glutamate 205. Aspartate 242, glutamate 285, and aspartate 312 together coordinate Mg(2+). Lysine 337, arginine 366, serine 367, and lysine 388 together coordinate (2R)-2-phosphoglycerate. Lysine 337 (proton acceptor) is an active-site residue.

It belongs to the enolase family. Mg(2+) serves as cofactor.

The protein localises to the cytoplasm. It is found in the secreted. Its subcellular location is the cell surface. It carries out the reaction (2R)-2-phosphoglycerate = phosphoenolpyruvate + H2O. The protein operates within carbohydrate degradation; glycolysis; pyruvate from D-glyceraldehyde 3-phosphate: step 4/5. In terms of biological role, catalyzes the reversible conversion of 2-phosphoglycerate (2-PG) into phosphoenolpyruvate (PEP). It is essential for the degradation of carbohydrates via glycolysis. In Paraburkholderia phymatum (strain DSM 17167 / CIP 108236 / LMG 21445 / STM815) (Burkholderia phymatum), this protein is Enolase.